The primary structure comprises 273 residues: Photosystem I chlorophyll a/b-binding protein 3-1, chloroplastic (273 aa).

Residues 1 to 39 constitute a chloroplast transit peptide; that stretch reads MAAQALVSSSLTSSVQTARQIFGSKPVASASQKKSSFVV. Position 56 (Trp-56) interacts with chlorophyll b. Chlorophyll a is bound by residues Phe-76, Ser-82, and Glu-100. Residue Arg-105 coordinates chlorophyll b. The helical transmembrane segment at 106–126 threads the bilayer; the sequence is FAMLGAAGAIAPEILGKAGLI. Ile-140 serves as a coordination point for chlorophyll b. Residues 146–166 form a helical membrane-spanning segment; sequence YTYWADNYTLFVLEMALMGFA. Residues Glu-167 and Arg-170 each contribute to the chlorophyll b site. Phosphoserine is present on Ser-195. Chlorophyll a-binding residues include Lys-224, Glu-225, Asn-228, Arg-230, Gln-242, and His-257. The helical transmembrane segment at 231–251 threads the bilayer; it reads LAMLAILGYFIQGLVTGVGPY. Phe-272 provides a ligand contact to chlorophyll b.

It belongs to the light-harvesting chlorophyll a/b-binding (LHC) protein family. As to quaternary structure, the LHC complex consists of chlorophyll a-b binding proteins. Red-emitting heterodimer with LHCA2. Interacts with LHCA5. Binds to carotenoids. It depends on Binds at least 14 chlorophylls (8 Chl-a and 6 Chl-b) and carotenoids such as lutein and neoxanthin. as a cofactor. Post-translationally, photoregulated by reversible phosphorylation of its threonine residues.

The protein resides in the plastid. It localises to the chloroplast thylakoid membrane. Functionally, the light-harvesting complex (LHC) functions as a light receptor, it captures and delivers excitation energy to photosystems with which it is closely associated, here photosystem I. The protein is Photosystem I chlorophyll a/b-binding protein 3-1, chloroplastic of Arabidopsis thaliana (Mouse-ear cress).